Consider the following 74-residue polypeptide: MSNKEDIIKMEGTIVEALPNAMFRVELENGHKILAHISGKMRKNFIRLVPGDKVVVELTIYDLTKGRIVYRKKS.

Positions 1 to 73 (MSNKEDIIKM…TKGRIVYRKK (73 aa)) constitute an S1-like domain.

The protein belongs to the IF-1 family. As to quaternary structure, component of the 30S ribosomal translation pre-initiation complex which assembles on the 30S ribosome in the order IF-2 and IF-3, IF-1 and N-formylmethionyl-tRNA(fMet); mRNA recruitment can occur at any time during PIC assembly.

It is found in the cytoplasm. One of the essential components for the initiation of protein synthesis. Stabilizes the binding of IF-2 and IF-3 on the 30S subunit to which N-formylmethionyl-tRNA(fMet) subsequently binds. Helps modulate mRNA selection, yielding the 30S pre-initiation complex (PIC). Upon addition of the 50S ribosomal subunit IF-1, IF-2 and IF-3 are released leaving the mature 70S translation initiation complex. The polypeptide is Translation initiation factor IF-1 (Thermosipho melanesiensis (strain DSM 12029 / CIP 104789 / BI429)).